The sequence spans 278 residues: 3-methyl-2-oxobutanoate hydroxymethyltransferase (278 aa).

Positions 43 and 82 each coordinate Mg(2+). 3-methyl-2-oxobutanoate is bound by residues 43–44 (DS), aspartate 82, and lysine 112. Glutamate 114 lines the Mg(2+) pocket. Catalysis depends on glutamate 181, which acts as the Proton acceptor.

Belongs to the PanB family. Homodecamer; pentamer of dimers. Mg(2+) serves as cofactor.

Its subcellular location is the cytoplasm. The enzyme catalyses 3-methyl-2-oxobutanoate + (6R)-5,10-methylene-5,6,7,8-tetrahydrofolate + H2O = 2-dehydropantoate + (6S)-5,6,7,8-tetrahydrofolate. Its pathway is cofactor biosynthesis; (R)-pantothenate biosynthesis; (R)-pantoate from 3-methyl-2-oxobutanoate: step 1/2. In terms of biological role, catalyzes the reversible reaction in which hydroxymethyl group from 5,10-methylenetetrahydrofolate is transferred onto alpha-ketoisovalerate to form ketopantoate. The chain is 3-methyl-2-oxobutanoate hydroxymethyltransferase from Desulfitobacterium hafniense (strain DSM 10664 / DCB-2).